Here is a 114-residue protein sequence, read N- to C-terminus: Hydrogenase maturation factor HypA (114 aa).

Ni(2+) is bound at residue H2. Zn(2+)-binding residues include C73, C76, C90, and C93.

This sequence belongs to the HypA/HybF family.

In terms of biological role, involved in the maturation of [NiFe] hydrogenases. Required for nickel insertion into the metal center of the hydrogenase. This is Hydrogenase maturation factor HypA from Chloroflexus aurantiacus (strain ATCC 29366 / DSM 635 / J-10-fl).